The chain runs to 307 residues: Bifunctional protein FolD 3 (307 aa).

NADP(+)-binding positions include 169–171 (GRS), S194, and I235.

It belongs to the tetrahydrofolate dehydrogenase/cyclohydrolase family. As to quaternary structure, homodimer.

It carries out the reaction (6R)-5,10-methylene-5,6,7,8-tetrahydrofolate + NADP(+) = (6R)-5,10-methenyltetrahydrofolate + NADPH. The catalysed reaction is (6R)-5,10-methenyltetrahydrofolate + H2O = (6R)-10-formyltetrahydrofolate + H(+). It functions in the pathway one-carbon metabolism; tetrahydrofolate interconversion. Functionally, catalyzes the oxidation of 5,10-methylenetetrahydrofolate to 5,10-methenyltetrahydrofolate and then the hydrolysis of 5,10-methenyltetrahydrofolate to 10-formyltetrahydrofolate. In Ectopseudomonas mendocina (strain ymp) (Pseudomonas mendocina), this protein is Bifunctional protein FolD 3.